The sequence spans 146 residues: 3-hydroxyacyl-[acyl-carrier-protein] dehydratase FabZ (146 aa).

Residue His49 is part of the active site.

This sequence belongs to the thioester dehydratase family. FabZ subfamily.

It localises to the cytoplasm. It carries out the reaction a (3R)-hydroxyacyl-[ACP] = a (2E)-enoyl-[ACP] + H2O. In terms of biological role, involved in unsaturated fatty acids biosynthesis. Catalyzes the dehydration of short chain beta-hydroxyacyl-ACPs and long chain saturated and unsaturated beta-hydroxyacyl-ACPs. This is 3-hydroxyacyl-[acyl-carrier-protein] dehydratase FabZ from Psychrobacter arcticus (strain DSM 17307 / VKM B-2377 / 273-4).